Reading from the N-terminus, the 642-residue chain is Regulator of MON1-CCZ1 complex (642 aa).

Residues 462–616 (RPYTESILML…KLYETLSFPK (155 aa)) enclose the Mic1 domain.

It belongs to the RMC1 family. As to quaternary structure, component of the Mon1-Ccz1 guanyl-nucleotide exchange factor complex made up of Mon1, Ccz1 and Bulli; the interaction of Bulli with the Mon1-Ccz1 heterodimer is mediated via the C-terminal Mic1 domain of Bulli. Mon1 and Ccz1 form a stable complex which displays Rab7 GEF activity with or without Bulli; GEF activity is enhanced by Bulli possibly by improving membrane association of the complex.

It is found in the late endosome. Functionally, positive regulator of the Rab7 guanyl-nucleotide exchange activity of the Mon1-Ccz1 complex, possibly by enhancing its endosomal membrane association. As part of the Mon1-Ccz1 complex involved in endolysosomal biogenesis possibly by mediating Rab conversion, the replacement of Rab5 with Rab7 during late endosome maturation. The protein is Regulator of MON1-CCZ1 complex of Drosophila melanogaster (Fruit fly).